We begin with the raw amino-acid sequence, 581 residues long: Arginine--tRNA ligase (581 aa).

Positions 126 to 136 match the 'HIGH' region motif; sequence PNLAKEMHVGH.

It belongs to the class-I aminoacyl-tRNA synthetase family. Monomer.

It is found in the cytoplasm. It carries out the reaction tRNA(Arg) + L-arginine + ATP = L-arginyl-tRNA(Arg) + AMP + diphosphate. The protein is Arginine--tRNA ligase of Shewanella baltica (strain OS155 / ATCC BAA-1091).